A 206-amino-acid chain; its full sequence is Large ribosomal subunit protein uL4 (206 aa).

Positions 49–76 are disordered; it reads QSAKTRTEVRGGGIKPWRQKGTGRARQG.

It belongs to the universal ribosomal protein uL4 family. In terms of assembly, part of the 50S ribosomal subunit.

One of the primary rRNA binding proteins, this protein initially binds near the 5'-end of the 23S rRNA. It is important during the early stages of 50S assembly. It makes multiple contacts with different domains of the 23S rRNA in the assembled 50S subunit and ribosome. Functionally, forms part of the polypeptide exit tunnel. This chain is Large ribosomal subunit protein uL4, found in Clostridium botulinum (strain Alaska E43 / Type E3).